A 230-amino-acid chain; its full sequence is Interleukin-6 (230 aa).

The signal sequence occupies residues 1 to 24; it reads MASKHNADLSSAAMLAALLLCALG. Residues cysteine 96 and cysteine 106 are joined by a disulfide bond. N-linked (GlcNAc...) asparagine glycosylation occurs at asparagine 100. Basic and acidic residues predominate over residues 206–218; it reads REMPKQKRRKDDG. The disordered stretch occupies residues 206-230; that stretch reads REMPKQKRRKDDGIIPPIHPSYQMT.

The protein belongs to the IL-6 superfamily. As to quaternary structure, component of a hexamer of two molecules each of IL6, IL6R and IL6ST; first binds to IL6R to associate with the signaling subunit IL6ST. In terms of tissue distribution, expressed in kidney and spleen. Low expression in liver and gills.

Its subcellular location is the secreted. In terms of biological role, cytokine with a wide variety of biological functions in immunity, tissue regeneration, and metabolism. Binds to IL6R, then the complex associates to the signaling subunit IL6ST/gp130 to trigger the intracellular IL6-signaling pathway. The interaction with the membrane-bound IL6R and IL6ST stimulates 'classic signaling', whereas the binding of IL6 and soluble IL6R to IL6ST stimulates 'trans-signaling'. Alternatively, 'cluster signaling' occurs when membrane-bound IL6:IL6R complexes on transmitter cells activate IL6ST receptors on neighboring receiver cells. The chain is Interleukin-6 (il6) from Paralichthys olivaceus (Bastard halibut).